Here is a 264-residue protein sequence, read N- to C-terminus: uncharacterized protein (264 aa).

ATP is bound at residue 15-22; sequence KGGTGKTT.

It belongs to the ParA family. MinD subfamily.

This is an uncharacterized protein from Methanocaldococcus jannaschii (strain ATCC 43067 / DSM 2661 / JAL-1 / JCM 10045 / NBRC 100440) (Methanococcus jannaschii).